The following is a 910-amino-acid chain: Valine--tRNA ligase (910 aa).

A 'HIGH' region motif is present at residues proline 45–histidine 55. Positions lysine 554–serine 558 match the 'KMSKS' region motif. Residue lysine 557 participates in ATP binding. Residues aspartate 842–serine 910 adopt a coiled-coil conformation.

The protein belongs to the class-I aminoacyl-tRNA synthetase family. ValS type 1 subfamily. As to quaternary structure, monomer.

It localises to the cytoplasm. The catalysed reaction is tRNA(Val) + L-valine + ATP = L-valyl-tRNA(Val) + AMP + diphosphate. Functionally, catalyzes the attachment of valine to tRNA(Val). As ValRS can inadvertently accommodate and process structurally similar amino acids such as threonine, to avoid such errors, it has a 'posttransfer' editing activity that hydrolyzes mischarged Thr-tRNA(Val) in a tRNA-dependent manner. The polypeptide is Valine--tRNA ligase (Brucella melitensis biotype 1 (strain ATCC 23456 / CCUG 17765 / NCTC 10094 / 16M)).